The sequence spans 278 residues: Probable cytochrome c oxidase subunit 3 (278 aa).

The next 6 membrane-spanning stretches (helical) occupy residues 21-41 (PWPI…ISSM), 46-66 (FNMY…YSWW), 89-109 (IGMV…FASF), 174-194 (CVTA…MQVY), 212-232 (FYLA…FLIV), and 256-276 (AWYW…VYIL).

Belongs to the cytochrome c oxidase subunit 3 family.

It is found in the cell membrane. The enzyme catalyses 4 Fe(II)-[cytochrome c] + O2 + 8 H(+)(in) = 4 Fe(III)-[cytochrome c] + 2 H2O + 4 H(+)(out). The protein is Probable cytochrome c oxidase subunit 3 (ctaE) of Rickettsia prowazekii (strain Madrid E).